Reading from the N-terminus, the 259-residue chain is Thiazole synthase (259 aa).

Lys102 acts as the Schiff-base intermediate with DXP in catalysis. 1-deoxy-D-xylulose 5-phosphate is bound by residues Gly163, 189–190 (AG), and 211–212 (NT).

Belongs to the ThiG family. Homotetramer. Forms heterodimers with either ThiH or ThiS.

It localises to the cytoplasm. It catalyses the reaction [ThiS sulfur-carrier protein]-C-terminal-Gly-aminoethanethioate + 2-iminoacetate + 1-deoxy-D-xylulose 5-phosphate = [ThiS sulfur-carrier protein]-C-terminal Gly-Gly + 2-[(2R,5Z)-2-carboxy-4-methylthiazol-5(2H)-ylidene]ethyl phosphate + 2 H2O + H(+). It participates in cofactor biosynthesis; thiamine diphosphate biosynthesis. In terms of biological role, catalyzes the rearrangement of 1-deoxy-D-xylulose 5-phosphate (DXP) to produce the thiazole phosphate moiety of thiamine. Sulfur is provided by the thiocarboxylate moiety of the carrier protein ThiS. In vitro, sulfur can be provided by H(2)S. The protein is Thiazole synthase of Novosphingobium aromaticivorans (strain ATCC 700278 / DSM 12444 / CCUG 56034 / CIP 105152 / NBRC 16084 / F199).